The primary structure comprises 700 residues: Polyribonucleotide nucleotidyltransferase (700 aa).

Mg(2+) contacts are provided by Asp485 and Asp491. In terms of domain architecture, KH spans 552-611 (PRITTLKINPEKIRDVIGKGGATIRALTEETGTTIELEDDGTVKIASANGDATKEAIRRI). In terms of domain architecture, S1 motif spans 621–689 (GTVYNGKVVR…RQGRVRLSMK (69 aa)).

The protein belongs to the polyribonucleotide nucleotidyltransferase family. As to quaternary structure, component of the RNA degradosome, which is a multiprotein complex involved in RNA processing and mRNA degradation. The cofactor is Mg(2+).

It is found in the cytoplasm. It catalyses the reaction RNA(n+1) + phosphate = RNA(n) + a ribonucleoside 5'-diphosphate. Involved in mRNA degradation. Catalyzes the phosphorolysis of single-stranded polyribonucleotides processively in the 3'- to 5'-direction. The sequence is that of Polyribonucleotide nucleotidyltransferase from Shewanella loihica (strain ATCC BAA-1088 / PV-4).